Consider the following 315-residue polypeptide: Outer membrane protease IcsP (315 aa).

Residues 1-20 form the signal peptide; it reads MKLKFFVLALCVPAIFTTHA. Residues Asp103, Asp105, Asp230, and His232 contribute to the active site.

Belongs to the peptidase A26 family.

The protein localises to the cell outer membrane. Functionally, protease responsible for the cleavage of IcsA between 'Arg-758' and 'Arg-759', removing the entire alpha domain from IscA localized on the bacterial surface. This proteolytic activity contributes to the maintenance of a tight polar cap of IcsA, which is important to Shigella actin-based motility. The sequence is that of Outer membrane protease IcsP (icsP) from Shigella flexneri.